The sequence spans 648 residues: Nucleoside triphosphatase I (648 aa).

A Helicase ATP-binding domain is found at 48 to 213 (FIGLKNLNSM…NNLIGLLRPN (166 aa)). 61–68 (WDTGTGKT) contributes to the ATP binding site. Positions 151–154 (DEVH) match the DEXH box motif. The Helicase C-terminal domain maps to 379 to 542 (YIEACRIILN…KINVVFDLLK (164 aa)). The tract at residues 468–534 (DIIILDMPWN…DIIKNKQGKI (67 aa)) is binding to the cap-specific mRNA (nucleoside-2'-O-)-methyltransferase.

The protein belongs to the helicase family. NPH I subfamily. In terms of assembly, monomer. Interacts (via C-terminus) with RAP94 (via N-terminus). Interacts with the cap-specific mRNA (nucleoside-2'-O-)-methyltransferase.

The protein resides in the virion. It catalyses the reaction a ribonucleoside 5'-triphosphate + H2O = a ribonucleoside 5'-diphosphate + phosphate + H(+). Functionally, DNA-dependent ATPase required for providing the needed energy to achieve the termination of early transcripts. Acts in concert with the RAP94 subunit of the virion RNA polymerase and the capping enzyme/VTF to catalyze release of UUUUUNU-containing nascent RNA from the elongation complex. NPH-I must bind ssDNA in order to exhibit ATPase activity. This chain is Nucleoside triphosphatase I (NPH1), found in Choristoneura fumiferana (Spruce budworm moth).